A 287-amino-acid chain; its full sequence is 1-acyl-sn-glycerol-3-phosphate acyltransferase alpha (287 aa).

Positions 1 to 26 are cleaved as a signal peptide; that stretch reads MELWPGAGTLLLLLFLLLLLLLPTLW. The Lumenal segment spans residues 27–37; sequence FCSPSAKYFFK. A helical membrane pass occupies residues 38-58; the sequence is MAFYNGWILFLAVLAIPVCAV. Residues 59 to 127 lie on the Cytoplasmic side of the membrane; it reads RGRNVENMKI…PGHCVPIAKR (69 aa). An HXXXXD motif motif is present at residues 104–109; that stretch reads HQSSLD. Residues 128–148 traverse the membrane as a helical segment; the sequence is ELLWAGSAGLACWLAGVIFID. The Lumenal portion of the chain corresponds to 149–192; it reads RKRTGDAISVMSEVAQTLLTQDVRVWVFPEGTRNHNGSMLPFKR. The EGTR motif signature appears at 178 to 181; that stretch reads EGTR.

The protein belongs to the 1-acyl-sn-glycerol-3-phosphate acyltransferase family.

The protein resides in the endoplasmic reticulum membrane. It catalyses the reaction a 1-acyl-sn-glycero-3-phosphate + an acyl-CoA = a 1,2-diacyl-sn-glycero-3-phosphate + CoA. The enzyme catalyses 1-(9Z-octadecenoyl)-sn-glycero-3-phosphate + (9Z)-octadecenoyl-CoA = 1,2-di-(9Z-octadecenoyl)-sn-glycero-3-phosphate + CoA. It carries out the reaction 1-(9Z-octadecenoyl)-sn-glycero-3-phosphate + hexadecanoyl-CoA = 1-(9Z)-octadecenoyl-2-hexadecanoyl-sn-glycero-3-phosphate + CoA. The catalysed reaction is heptadecanoyl-CoA + 1-(9Z-octadecenoyl)-sn-glycero-3-phosphate = 1-(9Z)-octadecenoyl-2-heptadecanoyl-sn-glycero-3-phosphate + CoA. It catalyses the reaction 1-(9Z-octadecenoyl)-sn-glycero-3-phosphate + octadecanoyl-CoA = 1-(9Z-octadecenoyl)-2-octadecanoyl-sn-glycero-3-phosphate + CoA. The enzyme catalyses 1-(9Z-octadecenoyl)-sn-glycero-3-phosphate + (9Z,12Z)-octadecadienoyl-CoA = 1-(9Z)-octadecenoyl-2-(9Z,12Z)-octadecadienoyl-sn-glycero-3-phosphate + CoA. It carries out the reaction 1-(9Z-octadecenoyl)-sn-glycero-3-phosphate + tetradecanoyl-CoA = 1-(9Z)-octadecenoyl-2-tetradecanoyl-sn-glycero-3-phosphate + CoA. The catalysed reaction is pentadecanoyl-CoA + 1-(9Z-octadecenoyl)-sn-glycero-3-phosphate = 1-(9Z)-octadecenoyl-2-pentadecanoyl-sn-glycero-3-phosphate + CoA. It catalyses the reaction 1-hexadecanoyl-sn-glycero-3-phosphate + (9Z)-octadecenoyl-CoA = 1-hexadecanoyl-2-(9Z-octadecenoyl)-sn-glycero-3-phosphate + CoA. The enzyme catalyses 1-(9Z,12Z,15Z)-octadecatrienoyl-sn-glycero-3-phosphate + (9Z)-octadecenoyl-CoA = 1-(9Z,12Z,15Z)-octadecatrienoyl-2-(9Z)-octadecenoyl-sn-glycero-3-phosphate + CoA. It carries out the reaction 1-(6Z,9Z,12Z-octadecatrienoyl)-sn-glycero-3-phosphate + (9Z)-octadecenoyl-CoA = (6Z,9Z,12Z)-octadecatrienoyl-2-(9Z)-octadecenoyl-sn-glycero-3-phosphate + CoA. The catalysed reaction is 1-eicosanoyl-sn-glycero-3-phosphate + (9Z)-octadecenoyl-CoA = 1-eicosanoyl-2-(9Z)-octadecenoyl-sn-glycero-3-phosphate + CoA. It catalyses the reaction 1-tetradecanoyl-sn-glycerol 3-phosphate + (9Z)-octadecenoyl-CoA = 1-tetradecanoyl-2-(9Z)-octadecenoyl-sn-glycero-3-phosphate + CoA. The enzyme catalyses 1-(9Z-octadecenoyl)-sn-glycero-3-phosphate + (5Z,8Z,11Z,14Z)-eicosatetraenoyl-CoA = 1-(9Z)-octadecenoyl-2-(5Z,8Z,11Z,14Z)-eicosatetraenoyl-sn-glycero-3-phosphate + CoA. It carries out the reaction 1-(9Z-octadecenoyl)-sn-glycero-3-phosphate + dodecanoyl-CoA = 1-(9Z)-octadecenoyl-2-dodecanoyl-sn-glycero-3-phosphate + CoA. The catalysed reaction is (6Z)-octadecenoyl-CoA + 1-(9Z-octadecenoyl)-sn-glycero-3-phosphate = 1-(9Z)-octadecenoyl-2-(6Z)-octadecenoyl-sn-glycero-3-phosphate + CoA. It catalyses the reaction (11Z)-octadecenoyl-CoA + 1-(9Z-octadecenoyl)-sn-glycero-3-phosphate = 1-(9Z)-octadecenoyl-2-(11Z)-octadecenoyl-sn-glycero-3-phosphate + CoA. The enzyme catalyses (9Z)-hexadecenoyl-CoA + 1-(9Z-octadecenoyl)-sn-glycero-3-phosphate = 1-(9Z-octadecenoyl)-2-(9Z-hexadecenoyl)-sn-glycero-3-phosphate + CoA. The protein operates within phospholipid metabolism; CDP-diacylglycerol biosynthesis; CDP-diacylglycerol from sn-glycerol 3-phosphate: step 2/3. Functionally, converts 1-acyl-sn-glycerol-3-phosphate (lysophosphatidic acid or LPA) into 1,2-diacyl-sn-glycerol-3-phosphate (phosphatidic acid or PA) by incorporating an acyl moiety at the sn-2 position of the glycerol backbone. This Ovis aries (Sheep) protein is 1-acyl-sn-glycerol-3-phosphate acyltransferase alpha (AGPAT1).